The chain runs to 926 residues: Translation initiation factor IF-2 (926 aa).

2 disordered regions span residues 1-185 (MTDS…EEVE) and 200-299 (EDKA…RRRG). Composition is skewed to low complexity over residues 13-24 (TGKKTLTLKPTG) and 70-96 (APAT…AAPQ). The segment covering 110–133 (TNQYSQQRHPGQQNRPQASSQPSR) has biased composition (polar residues). The segment covering 151 to 185 (MDARRRALAEAQVREVEDAKRRAEEEVRRQAEEVE) has biased composition (basic and acidic residues). A compositionally biased stretch (low complexity) spans 211–251 (APEPVAEPVAPVAETPRAADPAPRAPSPAGAKPAAGAPAPS). Residues 424–591 (SRPPVVTIMG…AVLLQAEILD (168 aa)) form the tr-type G domain. The G1 stretch occupies residues 433–440 (GHVDHGKT). 433 to 440 (GHVDHGKT) provides a ligand contact to GTP. Residues 458 to 462 (GITQH) form a G2 region. The interval 479–482 (DTPG) is G3. Residues 479 to 483 (DTPGH) and 533 to 536 (NKID) contribute to the GTP site. A G4 region spans residues 533–536 (NKID). The segment at 569–571 (SAK) is G5.

Belongs to the TRAFAC class translation factor GTPase superfamily. Classic translation factor GTPase family. IF-2 subfamily.

It is found in the cytoplasm. Its function is as follows. One of the essential components for the initiation of protein synthesis. Protects formylmethionyl-tRNA from spontaneous hydrolysis and promotes its binding to the 30S ribosomal subunits. Also involved in the hydrolysis of GTP during the formation of the 70S ribosomal complex. The sequence is that of Translation initiation factor IF-2 from Allorhizobium ampelinum (strain ATCC BAA-846 / DSM 112012 / S4) (Agrobacterium vitis (strain S4)).